Reading from the N-terminus, the 598-residue chain is NADPH-dependent diflavin oxidoreductase 1 (598 aa).

The region spanning 6-150 (LLVLFGSQTG…AIDPWVGDLW (145 aa)) is the Flavodoxin-like domain. FMN-binding positions include 12–17 (SQTGTA), 59–62 (ATTG), 97–106 (LGDSSYAKFN), and D132. An FAD-binding FR-type domain is found at 206–448 (LQPFLAPVIT…VRPGSLVFPK (243 aa)). FAD contacts are provided by residues R350, 382-385 (RAFS), and 416-419 (GLCS). NADP(+)-binding positions include T461, 516-517 (SR), 522-526 (KVYVQ), and D559. FAD is bound at residue W597.

The protein belongs to the NADPH-dependent diflavin oxidoreductase NDOR1 family. This sequence in the N-terminal section; belongs to the flavodoxin family. In the C-terminal section; belongs to the flavoprotein pyridine nucleotide cytochrome reductase family. In terms of assembly, interacts with CIAPIN1; as part of the cytosolic iron-sulfur (Fe-S) protein assembly (CIA) machinery. Interacts with DCPS. The cofactor is FAD. Requires FMN as cofactor.

Its subcellular location is the cytoplasm. The protein resides in the perinuclear region. The enzyme catalyses 2 oxidized [2Fe-2S]-[protein] + NADPH = 2 reduced [2Fe-2S]-[protein] + NADP(+) + H(+). Its function is as follows. NADPH-dependent reductase which is a central component of the cytosolic iron-sulfur (Fe-S) protein assembly (CIA) machinery. Transfers electrons from NADPH via its FAD and FMN prosthetic groups to the [2Fe-2S] cluster of CIAPIN1, another key component of the CIA machinery. In turn, this reduced cluster provides electrons for assembly of cytosolic iron-sulfur cluster proteins. It can also reduce the [2Fe-2S] cluster of CISD1 and activate this protein implicated in Fe/S cluster repair. In vitro can fully activate methionine synthase/MTR in the presence of soluble cytochrome b5/CYB5A. This Mus musculus (Mouse) protein is NADPH-dependent diflavin oxidoreductase 1.